The sequence spans 367 residues: Uroporphyrinogen decarboxylase (367 aa).

Residue methionine 1 is modified to N-acetylmethionine. Arginine 37, alanine 39, arginine 41, arginine 50, aspartate 86, tyrosine 164, serine 219, and histidine 339 together coordinate coproporphyrinogen I. Coproporphyrinogen III-binding residues include arginine 37, alanine 39, and arginine 41. Coproporphyrinogen III is bound by residues aspartate 86, tyrosine 164, serine 219, and histidine 339.

It belongs to the uroporphyrinogen decarboxylase family. In terms of assembly, homodimer.

The protein resides in the cytoplasm. It localises to the cytosol. It catalyses the reaction uroporphyrinogen III + 4 H(+) = coproporphyrinogen III + 4 CO2. The catalysed reaction is uroporphyrinogen I + 4 H(+) = coproporphyrinogen I + 4 CO2. It participates in porphyrin-containing compound metabolism; protoporphyrin-IX biosynthesis; coproporphyrinogen-III from 5-aminolevulinate: step 4/4. Functionally, catalyzes the sequential decarboxylation of the four acetate side chains of uroporphyrinogen to form coproporphyrinogen and participates in the fifth step in the heme biosynthetic pathway. Isomer I or isomer III of uroporphyrinogen may serve as substrate, but only coproporphyrinogen III can ultimately be converted to heme. In vitro also decarboxylates pentacarboxylate porphyrinogen I. This Ovis aries (Sheep) protein is Uroporphyrinogen decarboxylase.